The primary structure comprises 170 residues: Envelope protein 166 (170 aa).

M1 is a topological domain (intravirion). Residues F2 to F22 form a helical membrane-spanning segment. At Y23–L170 the chain is on the virion surface side.

The protein belongs to the asfivirus envelope protein p22 family.

It localises to the virion membrane. The protein resides in the host cell membrane. The polypeptide is Envelope protein 166 (Ornithodoros (relapsing fever ticks)).